The chain runs to 255 residues: Zinc import ATP-binding protein ZnuC (255 aa).

One can recognise an ABC transporter domain in the interval 5–220 (VALEHIAVAF…PDFIAMFGYR (216 aa)).

The protein belongs to the ABC transporter superfamily. Zinc importer (TC 3.A.1.15.5) family. As to quaternary structure, the complex is composed of two ATP-binding proteins (ZnuC), two transmembrane proteins (ZnuB) and a solute-binding protein (ZnuA).

The protein localises to the cell inner membrane. It catalyses the reaction Zn(2+)(out) + ATP(in) + H2O(in) = Zn(2+)(in) + ADP(in) + phosphate(in) + H(+)(in). Part of the ABC transporter complex ZnuABC involved in zinc import. Responsible for energy coupling to the transport system. The protein is Zinc import ATP-binding protein ZnuC of Sodalis glossinidius (strain morsitans).